Reading from the N-terminus, the 744-residue chain is Deleted in azoospermia protein 1 (744 aa).

The segment covering 1-10 (MSAANPETPN) has biased composition (polar residues). Residues 1–27 (MSAANPETPNSTISREASTQSSSAAAS) form a disordered region. Positions 11 to 27 (STISREASTQSSSAAAS) are enriched in low complexity. Residues 40–115 (NTVFVGGIDA…KKLKLGPAIR (76 aa)) enclose the RRM 1 domain. Residues 163–175 (QHVQSAANPETPN) are compositionally biased toward polar residues. The segment at 163-192 (QHVQSAANPETPNSTISREASTQSSSAAAS) is disordered. A compositionally biased stretch (low complexity) spans 176-192 (STISREASTQSSSAAAS). Positions 205–280 (NTVFVGGIDA…KKLKLGPAIR (76 aa)) constitute an RRM 2 domain. Residues 328–340 (QHVQSAANPETPN) are compositionally biased toward polar residues. The disordered stretch occupies residues 328-357 (QHVQSAANPETPNSTISREASTQSSSAAAS). Over residues 341 to 357 (STISREASTQSSSAAAS) the composition is skewed to low complexity. Residues 370 to 445 (NTVFVGGIDA…KKLKLGPAIR (76 aa)) form the RRM 3 domain. DAZ domains lie at 497–520 (AYSA…YNYQ), 521–544 (EYPT…YNYQ), 545–568 (PFPA…YNYQ), 569–592 (AFPA…YNYQ), 593–616 (PFPA…YNYQ), 617–640 (AFPA…YNYQ), 641–664 (AFPA…YNYQ), 665–688 (AFPA…YNYQ), and 689–712 (AFPA…YNYQ).

It belongs to the RRM DAZ family. In terms of assembly, forms a heterodimer with BOLL and DAZL. Interacts with PUM2, DAZAP1, DAZAP2, DZIP1 and DZIP3. Testis-specific. Expression restricted to premeiotic germ cells, particularly in spermatogonia (at protein level).

It is found in the cytoplasm. Its subcellular location is the nucleus. Its function is as follows. RNA-binding protein that plays an essential role in spermatogenesis. May act by binding to the 3'-UTR of mRNAs and regulating their translation. Promotes germ-cell progression to meiosis and formation of haploid germ cells. This Homo sapiens (Human) protein is Deleted in azoospermia protein 1 (DAZ1).